The sequence spans 99 residues: Ferredoxin, heterocyst (99 aa).

The 2Fe-2S ferredoxin-type domain maps to 4-96 (YQVRLINKKQ…NCTIKTHQEP (93 aa)). Residues Cys-42, Cys-47, Cys-50, and Cys-80 each coordinate [2Fe-2S] cluster.

Belongs to the 2Fe2S plant-type ferredoxin family. [2Fe-2S] cluster serves as cofactor.

Its function is as follows. Ferredoxins are iron-sulfur proteins that transfer electrons in a wide variety of metabolic reactions. Donates electrons to the nitrogenase. This is Ferredoxin, heterocyst (fdxH) from Nostoc sp. (strain PCC 7120 / SAG 25.82 / UTEX 2576).